We begin with the raw amino-acid sequence, 405 residues long: Aspartokinase (405 aa).

ACT domains follow at residues 267 to 344 and 345 to 405; these read VSME…AKVS and IVGV…QLDQ.

It belongs to the aspartokinase family.

The enzyme catalyses L-aspartate + ATP = 4-phospho-L-aspartate + ADP. It functions in the pathway amino-acid biosynthesis; L-lysine biosynthesis via DAP pathway; (S)-tetrahydrodipicolinate from L-aspartate: step 1/4. The protein operates within amino-acid biosynthesis; L-methionine biosynthesis via de novo pathway; L-homoserine from L-aspartate: step 1/3. It participates in amino-acid biosynthesis; L-threonine biosynthesis; L-threonine from L-aspartate: step 1/5. The protein is Aspartokinase (lysC) of Helicobacter pylori (strain J99 / ATCC 700824) (Campylobacter pylori J99).